We begin with the raw amino-acid sequence, 467 residues long: Citrate synthase, mitochondrial (467 aa).

Active-site residues include H301 and H347.

The protein belongs to the citrate synthase family.

The protein resides in the mitochondrion matrix. It carries out the reaction oxaloacetate + acetyl-CoA + H2O = citrate + CoA + H(+). The protein operates within carbohydrate metabolism; tricarboxylic acid cycle; isocitrate from oxaloacetate: step 1/2. This is Citrate synthase, mitochondrial (CIT) from Candida tropicalis (Yeast).